A 212-amino-acid chain; its full sequence is ER lumen protein-retaining receptor 2 (212 aa).

The Lumenal portion of the chain corresponds to 1-4 (MNVF). The helical transmembrane segment at 5–24 (RLSGDLCHLAAIIILLLKIW) threads the bilayer. The Cytoplasmic portion of the chain corresponds to 25–32 (NSRSCAGI). Residues 33-52 (SGKSQLLFAMVFTTRYLDLF) form a helical membrane-spanning segment. Residues 47–48 (RY) are interaction with the K-D-E-L motif on target proteins. Over 53–58 (TSFISL) the chain is Lumenal. Residues 59–79 (YNTSMKVIYMGCAYATVYLIY) form a helical membrane-spanning segment. Topologically, residues 80-92 (MKFKATYDGNHDT) are cytoplasmic. The chain crosses the membrane as a helical span at residues 93–110 (FRVEFLVVPVGGLSVLVN). The Lumenal portion of the chain corresponds to 111–116 (HDFSPL). Residues 117 to 135 (EILWTFSIYLESVAILPQL) traverse the membrane as a helical segment. The Cytoplasmic segment spans residues 136–149 (FMISKTGEAETITT). Residues 150–168 (HYLFFLGLYRALYLFNWIW) form a helical membrane-spanning segment. Positions 159 to 169 (RALYLFNWIWR) are interaction with the K-D-E-L motif on target proteins. At 169–178 (RFSFEGFFDL) the chain is on the lumenal side. Residues 179–199 (IAIVAGVVQTILYCDFFYLYV) traverse the membrane as a helical segment. Topologically, residues 200-212 (TKVLKGKKLSLPA) are cytoplasmic. An important for recycling of cargo proteins with the sequence motif K-D-E-L from the Golgi to the endoplasmic reticulum region spans residues 204 to 207 (KGKK).

Belongs to the ERD2 family.

The protein localises to the endoplasmic reticulum membrane. Its subcellular location is the golgi apparatus membrane. The protein resides in the cytoplasmic vesicle. It localises to the COPI-coated vesicle membrane. In terms of biological role, receptor for the C-terminal sequence motif K-D-E-L that is present on endoplasmic reticulum resident proteins and that mediates their recycling from the Golgi back to the endoplasmic reticulum. Binding is pH dependent, and is optimal at pH 5-5.4. This Xenopus laevis (African clawed frog) protein is ER lumen protein-retaining receptor 2 (kdelr2).